The primary structure comprises 154 residues: Deoxyuridine 5'-triphosphate nucleotidohydrolase (154 aa).

Residues 68–70, N81, and 85–87 contribute to the substrate site; these read RSG and TID.

The protein belongs to the dUTPase family. Mg(2+) serves as cofactor.

It catalyses the reaction dUTP + H2O = dUMP + diphosphate + H(+). The protein operates within pyrimidine metabolism; dUMP biosynthesis; dUMP from dCTP (dUTP route): step 2/2. Its function is as follows. This enzyme is involved in nucleotide metabolism: it produces dUMP, the immediate precursor of thymidine nucleotides and it decreases the intracellular concentration of dUTP so that uracil cannot be incorporated into DNA. This is Deoxyuridine 5'-triphosphate nucleotidohydrolase from Acidiphilium cryptum (strain JF-5).